We begin with the raw amino-acid sequence, 126 residues long: Probable small nuclear ribonucleoprotein Sm D1 (126 aa).

A Sm domain is found at 2–74; sequence KLVRFLMKLS…IRYIILPDPL (73 aa). The disordered stretch occupies residues 86-126; the sequence is RKKARAARAGASRGRGRGGMRGGRGGRGRGRGGPRGGGPRR. Residues 99-126 show a composition bias toward basic residues; it reads GRGRGGMRGGRGGRGRGRGGPRGGGPRR.

This sequence belongs to the snRNP core protein family.

Its subcellular location is the nucleus. It is found in the cytoplasm. It localises to the cytosol. Plays a role in pre-mRNA splicing as a core component of the spliceosomal U1, U2, U4 and U5 small nuclear ribonucleoproteins (snRNPs), the building blocks of the spliceosome. This chain is Probable small nuclear ribonucleoprotein Sm D1 (snr-3), found in Caenorhabditis elegans.